A 279-amino-acid chain; its full sequence is Fatty acid metabolism regulator protein (279 aa).

The region spanning 6-74 (KSPAGFAEKY…HGKPTKVNQF (69 aa)) is the HTH gntR-type domain. Positions 34–53 (ERELSELIGVTRTTLREVLQ) form a DNA-binding region, H-T-H motif.

In terms of assembly, homodimer.

It localises to the cytoplasm. Its function is as follows. Multifunctional regulator of fatty acid metabolism. The protein is Fatty acid metabolism regulator protein of Vibrio vulnificus (strain CMCP6).